Reading from the N-terminus, the 636-residue chain is Rik1-associated factor 2 (636 aa).

As to quaternary structure, component of the Clr4 methyltransferase complex (ClrC) composed of at least clr4, rik1, pcu4, rbx1, raf1 and raf2. The cullin pcu4, rik1, raf1, raf2 and the ring-box protein rbx1 are components of an E3 ubiquitin ligase, whose activity is essential for heterochromatin assembly. Interacts with pcu4.

Its subcellular location is the cytoplasm. The protein resides in the mitochondrion. It is found in the nucleus. The protein localises to the chromosome. In terms of biological role, component of the Clr4 methyltransferase complex (ClrC) which contributes to the establishment of heterochromatin by specifically methylating histone H3 to form H3K9me. ClrC preferentially ubiquitylates H3K14 and ClrC-mediated H3 ubiquitination promotes clr4 methyltransferase activity for the methylation of H3K9. H3K9me represents a specific tag for epigenetic transcriptional repression by recruiting swi6/HP1 to methylated histones which leads to transcriptional silencing within centromeric heterochromatin, telomeric regions and at the silent mating-type loci. Has a role in both mitotic and meiotic chromosome segregation. In Schizosaccharomyces pombe (strain 972 / ATCC 24843) (Fission yeast), this protein is Rik1-associated factor 2 (raf2).